The primary structure comprises 89 residues: Small ribosomal subunit protein uS15 (89 aa).

The span at Met-1 to Asp-21 shows a compositional bias: basic and acidic residues. A disordered region spans residues Met-1–Gly-23.

This sequence belongs to the universal ribosomal protein uS15 family. Part of the 30S ribosomal subunit. Forms a bridge to the 50S subunit in the 70S ribosome, contacting the 23S rRNA.

One of the primary rRNA binding proteins, it binds directly to 16S rRNA where it helps nucleate assembly of the platform of the 30S subunit by binding and bridging several RNA helices of the 16S rRNA. Functionally, forms an intersubunit bridge (bridge B4) with the 23S rRNA of the 50S subunit in the ribosome. This Rhodospirillum rubrum (strain ATCC 11170 / ATH 1.1.1 / DSM 467 / LMG 4362 / NCIMB 8255 / S1) protein is Small ribosomal subunit protein uS15.